Here is a 788-residue protein sequence, read N- to C-terminus: Protein translocase subunit SecA 2 (788 aa).

Residues Q86, 104-108, and D493 contribute to the ATP site; that span reads GEGKT.

Belongs to the SecA family. Monomer and homodimer. Part of the essential Sec protein translocation apparatus which comprises SecA, SecYEG and auxiliary proteins SecDF. Other proteins may also be involved.

It is found in the cell membrane. The protein localises to the cytoplasm. It carries out the reaction ATP + H2O + cellular proteinSide 1 = ADP + phosphate + cellular proteinSide 2.. In terms of biological role, part of the Sec protein translocase complex. Interacts with the SecYEG preprotein conducting channel. Has a central role in coupling the hydrolysis of ATP to the transfer of proteins into and across the cell membrane, serving as an ATP-driven molecular motor driving the stepwise translocation of polypeptide chains across the membrane. This is Protein translocase subunit SecA 2 from Bacillus thuringiensis (strain Al Hakam).